Reading from the N-terminus, the 433-residue chain is Methylenetetrahydrofolate--tRNA-(uracil-5-)-methyltransferase TrmFO (433 aa).

8-13 (GAGLAG) provides a ligand contact to FAD.

Belongs to the MnmG family. TrmFO subfamily. FAD serves as cofactor.

The protein resides in the cytoplasm. The enzyme catalyses uridine(54) in tRNA + (6R)-5,10-methylene-5,6,7,8-tetrahydrofolate + NADH + H(+) = 5-methyluridine(54) in tRNA + (6S)-5,6,7,8-tetrahydrofolate + NAD(+). It carries out the reaction uridine(54) in tRNA + (6R)-5,10-methylene-5,6,7,8-tetrahydrofolate + NADPH + H(+) = 5-methyluridine(54) in tRNA + (6S)-5,6,7,8-tetrahydrofolate + NADP(+). Its function is as follows. Catalyzes the folate-dependent formation of 5-methyl-uridine at position 54 (M-5-U54) in all tRNAs. This is Methylenetetrahydrofolate--tRNA-(uracil-5-)-methyltransferase TrmFO from Carboxydothermus hydrogenoformans (strain ATCC BAA-161 / DSM 6008 / Z-2901).